The following is a 511-amino-acid chain: 60 kDa neurofilament protein (511 aa).

Residues 1-32 are disordered; that stretch reads MSVTQKKTEISTTTTYEGESRPSSGMSGFSYS. The head stretch occupies residues 1-99; it reads MSVTQKKTEI…KANREREKQD (99 aa). A compositionally biased stretch (polar residues) spans 21–30; that stretch reads RPSSGMSGFS. An IF rod domain is found at 96–449; the sequence is EKQDMRDLNE…KLLEGEESRV (354 aa). The tract at residues 100-135 is coil 1A; it reads MRDLNERFANYIEKVRFLEAQNKKLAGELEELKSKW. The linker 1 stretch occupies residues 136 to 145; sequence GKETSAIKEM. Residues 146 to 284 form a coil 1B region; the sequence is YETELEEARK…VHAQELKELA (139 aa). Residues 285 to 303 form a linker 12 region; it reads ALAYRDTTAENREFWRNEL. Positions 304 to 449 are coil 2; it reads AQAIRDIQQE…KLLEGEESRV (146 aa). Positions 450–511 are tail; sequence GMKQIVEQVV…EEKKSMGSSD (62 aa). The disordered stretch occupies residues 479-511; sequence GYEATGGITTTTTTSSQERRSMSEEKKSMGSSD. Low complexity predominate over residues 483-492; the sequence is TGGITTTTTT. Basic and acidic residues predominate over residues 495-511; sequence QERRSMSEEKKSMGSSD.

It belongs to the intermediate filament family.

Its function is as follows. Major squid neurofilament protein. The sequence is that of 60 kDa neurofilament protein from Doryteuthis pealeii (Longfin inshore squid).